The following is a 750-amino-acid chain: Photosystem I P700 chlorophyll a apoprotein A1 (750 aa).

8 helical membrane-spanning segments follow: residues 70–93 (VFSA…FHGA), 156–179 (LYCT…FHYH), 195–219 (LNHH…HVSL), 291–309 (IAHH…GHMY), 346–369 (WHAQ…HHMY), 385–411 (LSLF…IFMV), 433–455 (AIIS…LYIH), and 531–549 (FLVH…LILL). [4Fe-4S] cluster contacts are provided by C573 and C582. The next 2 membrane-spanning stretches (helical) occupy residues 589-610 (HVFL…HFSW) and 664-686 (LSAY…MFLF). A chlorophyll a'-binding site is contributed by H675. The chlorophyll a site is built by M683 and Y691. W692 lines the phylloquinone pocket. The chain crosses the membrane as a helical span at residues 724–744 (AVGVTHYLLGGIATTWAFFLA).

Belongs to the PsaA/PsaB family. As to quaternary structure, the PsaA/B heterodimer binds the P700 chlorophyll special pair and subsequent electron acceptors. PSI consists of a core antenna complex that captures photons, and an electron transfer chain that converts photonic excitation into a charge separation. The eukaryotic PSI reaction center is composed of at least 11 subunits. Requires P700 is a chlorophyll a/chlorophyll a' dimer, A0 is one or more chlorophyll a, A1 is one or both phylloquinones and FX is a shared 4Fe-4S iron-sulfur center. as cofactor.

Its subcellular location is the plastid. The protein resides in the chloroplast thylakoid membrane. It carries out the reaction reduced [plastocyanin] + hnu + oxidized [2Fe-2S]-[ferredoxin] = oxidized [plastocyanin] + reduced [2Fe-2S]-[ferredoxin]. Its function is as follows. PsaA and PsaB bind P700, the primary electron donor of photosystem I (PSI), as well as the electron acceptors A0, A1 and FX. PSI is a plastocyanin-ferredoxin oxidoreductase, converting photonic excitation into a charge separation, which transfers an electron from the donor P700 chlorophyll pair to the spectroscopically characterized acceptors A0, A1, FX, FA and FB in turn. Oxidized P700 is reduced on the lumenal side of the thylakoid membrane by plastocyanin. The protein is Photosystem I P700 chlorophyll a apoprotein A1 of Lobularia maritima (Sweet alyssum).